An 84-amino-acid chain; its full sequence is Small ribosomal subunit protein bS16 (84 aa).

It belongs to the bacterial ribosomal protein bS16 family.

The chain is Small ribosomal subunit protein bS16 from Burkholderia multivorans (strain ATCC 17616 / 249).